Here is a 472-residue protein sequence, read N- to C-terminus: Glutamate synthase [NADPH] small chain (472 aa).

The 4Fe-4S ferredoxin-type domain occupies 41-72; sequence QDAAAQAHRCLHCGNPYCEWKCPVHNYIPNWL. [4Fe-4S] cluster is bound by residues Cys50, Cys53, Cys58, and Cys62.

[4Fe-4S] cluster is required as a cofactor.

The enzyme catalyses 2 L-glutamate + NADP(+) = L-glutamine + 2-oxoglutarate + NADPH + H(+). The protein operates within amino-acid biosynthesis; L-glutamate biosynthesis via GLT pathway; L-glutamate from 2-oxoglutarate and L-glutamine (NADP(+) route): step 1/1. It functions in the pathway energy metabolism; nitrogen metabolism. Catalyzes the conversion of L-glutamine and 2-oxoglutarate into two molecules of L-glutamate. In Halomonas elongata (strain ATCC 33173 / DSM 2581 / NBRC 15536 / NCIMB 2198 / 1H9), this protein is Glutamate synthase [NADPH] small chain.